Reading from the N-terminus, the 368-residue chain is Phosphate acyltransferase (368 aa).

The segment at 334 to 368 (AAPLGESGRDADGAGQASPSAGQPAEPSAALSSKT) is disordered.

Belongs to the PlsX family. Homodimer. Probably interacts with PlsY.

The protein resides in the cytoplasm. The enzyme catalyses a fatty acyl-[ACP] + phosphate = an acyl phosphate + holo-[ACP]. The protein operates within lipid metabolism; phospholipid metabolism. Its function is as follows. Catalyzes the reversible formation of acyl-phosphate (acyl-PO(4)) from acyl-[acyl-carrier-protein] (acyl-ACP). This enzyme utilizes acyl-ACP as fatty acyl donor, but not acyl-CoA. The polypeptide is Phosphate acyltransferase (Burkholderia thailandensis (strain ATCC 700388 / DSM 13276 / CCUG 48851 / CIP 106301 / E264)).